Consider the following 147-residue polypeptide: Ponticulin-like protein C4 (147 aa).

Positions 1 to 20 (MKFTKSLLLLIVAVFASSNA) are cleaved as a signal peptide. Asparagine 118 carries the GPI-like-anchor amidated asparagine lipid modification. Asparagine 118 carries an N-linked (GlcNAc...) asparagine glycan. The propeptide at 119-147 (SSESDSSDSTRIGASFALAAAALLSMIAL) is removed in mature form.

It belongs to the ponticulin family. In terms of processing, the GPI-like-anchor contains a phosphoceramide group, rather than a phosphatidyl group.

The protein resides in the cell membrane. This chain is Ponticulin-like protein C4 (ponC4), found in Dictyostelium discoideum (Social amoeba).